The following is a 181-amino-acid chain: Copper-resistant cuproprotein CopI (181 aa).

Positions 1 to 24 (MFPRRLLPASLIVLGVLFGASAQA) are cleaved as a signal peptide. Cu(2+)-binding residues include H79, C163, H168, and M173.

This sequence belongs to the CopI family.

It localises to the periplasm. Its function is as follows. Involved in copper tolerance. In Pseudomonas aeruginosa (strain ATCC 15692 / DSM 22644 / CIP 104116 / JCM 14847 / LMG 12228 / 1C / PRS 101 / PAO1), this protein is Copper-resistant cuproprotein CopI.